Here is a 176-residue protein sequence, read N- to C-terminus: Baseplate protein I (176 aa).

Belongs to the P2likevirus gpI protein family.

It localises to the virion. Baseplate protein that may be part of the wedges of the baseplate. Plays a role in tail assembly. The chain is Baseplate protein I (I) from Escherichia phage P2 (Bacteriophage P2).